The chain runs to 643 residues: Probable potassium transport system protein Kup 2 (643 aa).

The segment at 1–20 is disordered; sequence MSSHVPSFLRGTPDMTAHGG. Helical transmembrane passes span 27–47, 70–90, 120–140, 157–177, 185–205, 231–251, 267–287, 300–320, 357–377, 389–409, 419–439, and 440–460; these read VAGL…TSPL, VLSL…VIII, LMVS…SIIT, PHLE…LFAI, VGKM…ILGI, GWHA…AEAL, WYLL…ALLI, LAPA…TVIA, IYLP…VVGF, VAVT…MLLI, WLIG…SIKI, and PDGG…LTTW.

The protein belongs to the HAK/KUP transporter (TC 2.A.72) family.

The protein resides in the cell inner membrane. The catalysed reaction is K(+)(in) + H(+)(in) = K(+)(out) + H(+)(out). Transport of potassium into the cell. Likely operates as a K(+):H(+) symporter. The sequence is that of Probable potassium transport system protein Kup 2 from Paramagnetospirillum magneticum (strain ATCC 700264 / AMB-1) (Magnetospirillum magneticum).